A 317-amino-acid chain; its full sequence is Metaxin-1 (317 aa).

Residues Lys-38, Lys-41, and Lys-78 each participate in a glycyl lysine isopeptide (Lys-Gly) (interchain with G-Cter in ubiquitin) cross-link. A helical membrane pass occupies residues 164–184 (EELEKELYQEAQECLTLLSQR).

Belongs to the metaxin family. Interacts with MTX2/metaxin-2. Associates with the mitochondrial contact site and cristae organizing system (MICOS) complex, composed of at least MICOS10/MIC10, CHCHD3/MIC19, CHCHD6/MIC25, APOOL/MIC27, IMMT/MIC60, APOO/MIC23/MIC26 and QIL1/MIC13. This complex was also known under the names MINOS or MitOS complex. The MICOS complex associates with mitochondrial outer membrane proteins SAMM50, MTX1 and MTX2 (together described as components of the mitochondrial outer membrane sorting assembly machinery (SAM) complex) and DNAJC11, mitochondrial inner membrane protein TMEM11 and with HSPA9. The MICOS and SAM complexes together with DNAJC11 are part of a large protein complex spanning both membranes termed the mitochondrial intermembrane space bridging (MIB) complex. Interacts with ARMC1. In terms of processing, ubiquitinated by PRKN during mitophagy, leading to its degradation and enhancement of mitophagy. Deubiquitinated by USP30.

Its subcellular location is the mitochondrion outer membrane. Involved in transport of proteins into the mitochondrion. Essential for embryonic development. The sequence is that of Metaxin-1 (MTX1) from Bos taurus (Bovine).